Reading from the N-terminus, the 346-residue chain is Probable alcohol dehydrogenase AdhA (346 aa).

The Zn(2+) site is built by Cys51, His73, Cys109, Cys112, Cys115, Cys123, and Cys165.

The protein belongs to the zinc-containing alcohol dehydrogenase family. Zn(2+) is required as a cofactor.

The enzyme catalyses a primary alcohol + NAD(+) = an aldehyde + NADH + H(+). It carries out the reaction a secondary alcohol + NAD(+) = a ketone + NADH + H(+). The sequence is that of Probable alcohol dehydrogenase AdhA (adhA) from Mycobacterium tuberculosis (strain CDC 1551 / Oshkosh).